The chain runs to 1253 residues: Myosin heavy chain 95F (1253 aa).

Residues 3-54 (EDTQLVWVRDAAEGYIQGRITEIGAKEFEVTPTDRKYPKRTCHFDDIHSSCD) enclose the Myosin N-terminal SH3-like domain. A Myosin motor domain is found at 57–766 (QDHDDNCELM…KFVEFDRIMR (710 aa)). 151–158 (GESGAGKT) contributes to the ATP binding site. An actin-binding region spans residues 647-666 (GELMEKLEQNGTNFIRCIKP). The IQ domain maps to 808–837 (RNKCVLIAQRIARGFLARKQHRPRYQGIGK). Positions 900-1022 (ANMNKLTVDL…LRLANESNGQ (123 aa)) form a coiled coil. A hydrophobic region region spans residues 1187–1193 (PILLVAG). Positions 1233-1253 (AYKNLGAAKPNGPAAAMQKQQ) are disordered.

This sequence belongs to the TRAFAC class myosin-kinesin ATPase superfamily. Myosin family. In terms of tissue distribution, isoform B is present at a higher level in the head and gonads than in the thoraxes. Isoform 145 kDa is found only in the head. CLIP-190 and jar are coexpressed at several times in development and in a number of tissues, including embryonic axonal neuron processes and posterior pole.

It localises to the cytoplasm. The protein resides in the cytoskeleton. Functionally, myosin is a protein that binds to actin and has ATPase activity that is activated by actin. Together CLIP-190 and jar may coordinate the interaction between the actin and microtubule cytoskeleton. May link endocytic vesicles to microtubules and may be involved in transport in the early embryo and in the dynamic process of dorsal closure. It is believed that its function changes during the life cycle. The chain is Myosin heavy chain 95F (jar) from Drosophila melanogaster (Fruit fly).